The primary structure comprises 465 residues: Cysteine--tRNA ligase (465 aa).

Cys29 contributes to the Zn(2+) binding site. Positions 31–41 (PTVYNYIHIGN) match the 'HIGH' region motif. Zn(2+) contacts are provided by Cys209, His234, and Glu238. Positions 266 to 270 (KMSKS) match the 'KMSKS' region motif. Lys269 contacts ATP. Position 270 is a phosphoserine (Ser270).

Belongs to the class-I aminoacyl-tRNA synthetase family. Monomer. Zn(2+) serves as cofactor.

It localises to the cytoplasm. It catalyses the reaction tRNA(Cys) + L-cysteine + ATP = L-cysteinyl-tRNA(Cys) + AMP + diphosphate. The sequence is that of Cysteine--tRNA ligase from Bacillus cytotoxicus (strain DSM 22905 / CIP 110041 / 391-98 / NVH 391-98).